The primary structure comprises 359 residues: ATP synthase subunit gamma, chloroplastic (359 aa).

A chloroplast-targeting transit peptide spans M1 to R35. The active site involves C124. A disulfide bond links C234 and C240.

The protein belongs to the ATPase gamma chain family. F-type ATPases have 2 components, CF(1) - the catalytic core - and CF(0) - the membrane proton channel. CF(1) has five subunits: alpha(3), beta(3), gamma(1), delta(1), epsilon(1). CF(0) has four main subunits: a, b, b' and c.

The protein localises to the plastid. Its subcellular location is the chloroplast thylakoid membrane. Produces ATP from ADP in the presence of a proton gradient across the membrane. The gamma chain is believed to be important in regulating ATPase activity and the flow of protons through the CF(0) complex. In terms of biological role, inceptin is a proteolytic fragment produced by insect larvae that previously ingested the protein. This peptide mediate plant perception of herbivory through the induction of volatile, phenylpropanoid and protease inhibitor defenses such as ethylene, jasmonic acid and salicylic acid for example. The polypeptide is ATP synthase subunit gamma, chloroplastic (Zea mays (Maize)).